The following is a 589-amino-acid chain: Cysteine/serine-rich nuclear protein 1 (589 aa).

Disordered stretches follow at residues 1–62 (MTGL…RDFC) and 309–388 (FREL…GVDD). Low complexity-rich tracts occupy residues 17-41 (SSVS…SVSR) and 345-368 (DNSC…TSEA).

The protein belongs to the AXUD1 family. In terms of tissue distribution, ubiquitous. Most abundantly expressed in lung, placenta, skeletal muscle, pancreas and leukocyte. Frequently down-regulated in lung, kidney, liver and colon cancers compared with their corresponding normal tissues.

Its subcellular location is the nucleus. Its function is as follows. Binds to the consensus sequence 5'-AGAGTG-3' and has transcriptional activator activity. May have a tumor-suppressor function. May play a role in apoptosis. The protein is Cysteine/serine-rich nuclear protein 1 (CSRNP1) of Homo sapiens (Human).